The following is a 166-amino-acid chain: Ribosome maturation factor RimP (166 aa).

This sequence belongs to the RimP family.

The protein localises to the cytoplasm. Required for maturation of 30S ribosomal subunits. This Psychrobacter cryohalolentis (strain ATCC BAA-1226 / DSM 17306 / VKM B-2378 / K5) protein is Ribosome maturation factor RimP.